Here is a 313-residue protein sequence, read N- to C-terminus: MITLTQKDLLKAGVHLGHLSRKWNPSMAPFIFMESRGIHIIDLNKTLSQLQEAADTLQAVARSGKKILFVATKKQAKELVAQTAKSLNMPYMTERWLGGTLTNFITIRRLIKKLTSMERMMKSATYKNMAKKEQLMIARDKDKLERVLGGVLDLTKLPGALVVVDIMKESIAVQEARKLGIPIIALADTNVDPDLVDYPIPSNDDATPAIELIVRTLGEAINEGLSMRQEDKAAEAQDKDAQDTEDNKGARPRGAEKVAYSDADSEEDNAYGIAVKASKNKTAEPVERFKKSRTPVKGSRPIGVSKAGDKPKK.

Positions 228-256 (RQEDKAAEAQDKDAQDTEDNKGARPRGAE) are enriched in basic and acidic residues. The disordered stretch occupies residues 228 to 313 (RQEDKAAEAQ…VSKAGDKPKK (86 aa)).

It belongs to the universal ribosomal protein uS2 family.

This is Small ribosomal subunit protein uS2 from Amoebophilus asiaticus (strain 5a2).